The following is a 403-amino-acid chain: MSHRKFSAPRHGSLGFLPRKRSSRHRGKVKSFPKDDPSKPVHLTAFLGYKAGMTHIVREVDRPGSKVNKKEVVVAVTIVETPPMVVVGIVGYVETPRGLRTFKTVFAEHISDECKRRFYKNWHKSKKKAFTKYCKKWQDEDGKKQLEKDFSSMKKYCQVIRVIAHTQMRLLPLRQKKAHLMEIQVNGGTVAEKLDWARERLEQQVPVNQVFGQDEMIDVIGVTKGKGYKGVTSRWHTKKLPRKTHRGLRKVACIGARHPARVAFSVARAGQKGYHHRTEINKKIYKIGQGYLIKDGKLIKNNASTDYDLSDKSINPLGGFVHYGEVTNDFVMLKGCVVGTKKRVLTLRKSLLVQTKRRALEKIDLKFIDTTSKFGHGRFQTMEEKKAFMGPLKKDRIAKEEGA.

A disordered region spans residues 1 to 37 (MSHRKFSAPRHGSLGFLPRKRSSRHRGKVKSFPKDDP). Phosphoserine is present on Ser-13. Positions 18–31 (PRKRSSRHRGKVKS) are enriched in basic residues. Lys-39 is covalently cross-linked (Glycyl lysine isopeptide (Lys-Gly) (interchain with G-Cter in SUMO2)). Lys-136 carries the post-translational modification N6-acetyllysine. Residues Lys-224 and Lys-226 each participate in a glycyl lysine isopeptide (Lys-Gly) (interchain with G-Cter in SUMO2) cross-link. The residue at position 245 (His-245) is a Tele-methylhistidine. N6-acetyllysine; alternate occurs at positions 286 and 294. Residue Lys-286 forms a Glycyl lysine isopeptide (Lys-Gly) (interchain with G-Cter in SUMO2); alternate linkage. A Glycyl lysine isopeptide (Lys-Gly) (interchain with G-Cter in SUMO1); alternate cross-link involves residue Lys-294. Ser-304 carries the phosphoserine modification. Lys-366 carries the N6-acetyllysine; alternate modification. A Glycyl lysine isopeptide (Lys-Gly) (interchain with G-Cter in SUMO2); alternate cross-link involves residue Lys-366. Lys-373 is modified (N6-acetyllysine). Glycyl lysine isopeptide (Lys-Gly) (interchain with G-Cter in SUMO2) cross-links involve residues Lys-386, Lys-393, and Lys-399.

This sequence belongs to the universal ribosomal protein uL3 family. In terms of assembly, component of the large ribosomal subunit. Interacts with DHX33. Constitutively monomethylated at His-245 by METTL18. Methylation at His-245 regulates translation elongation by slowing ribosome traversal on tyrosine codons: slower elongation provides enough time for proper folding of synthesized proteins and prevents cellular aggregation of tyrosine-rich proteins It is not required for incorporation of RPL3 into ribosomes.

The protein resides in the nucleus. It localises to the nucleolus. The protein localises to the cytoplasm. Functionally, component of the large ribosomal subunit. The ribosome is a large ribonucleoprotein complex responsible for the synthesis of proteins in the cell. This chain is Large ribosomal subunit protein uL3 (RPL3), found in Macaca fascicularis (Crab-eating macaque).